We begin with the raw amino-acid sequence, 264 residues long: Pimeloyl-[acyl-carrier protein] methyl ester esterase (264 aa).

The AB hydrolase-1 domain occupies leucine 23–phenylalanine 244. Residues tryptophan 29, serine 87 to leucine 88, and phenylalanine 150 to glutamine 154 each bind substrate. Residue serine 87 is the Nucleophile of the active site. Catalysis depends on residues aspartate 214 and histidine 241. Histidine 241 is a substrate binding site.

Belongs to the AB hydrolase superfamily. Carboxylesterase BioH family. Monomer.

The protein localises to the cytoplasm. It carries out the reaction 6-carboxyhexanoyl-[ACP] methyl ester + H2O = 6-carboxyhexanoyl-[ACP] + methanol + H(+). It functions in the pathway cofactor biosynthesis; biotin biosynthesis. In terms of biological role, the physiological role of BioH is to remove the methyl group introduced by BioC when the pimeloyl moiety is complete. It allows to synthesize pimeloyl-ACP via the fatty acid synthetic pathway through the hydrolysis of the ester bonds of pimeloyl-ACP esters. This chain is Pimeloyl-[acyl-carrier protein] methyl ester esterase, found in Shewanella sp. (strain MR-7).